The sequence spans 362 residues: Transcriptional repressor PifC (362 aa).

Its function is as follows. Transcription repression of its own gene by binding to the PIF operator (pifO) and replication initiation from the primary origin (ori-1). Transcriptional repressor of the pifA and pifB. The chain is Transcriptional repressor PifC (pifC) from Escherichia coli (strain K12).